We begin with the raw amino-acid sequence, 484 residues long: Aspartyl/glutamyl-tRNA(Asn/Gln) amidotransferase subunit B (484 aa).

Belongs to the GatB/GatE family. GatB subfamily. In terms of assembly, heterotrimer of A, B and C subunits.

The catalysed reaction is L-glutamyl-tRNA(Gln) + L-glutamine + ATP + H2O = L-glutaminyl-tRNA(Gln) + L-glutamate + ADP + phosphate + H(+). It carries out the reaction L-aspartyl-tRNA(Asn) + L-glutamine + ATP + H2O = L-asparaginyl-tRNA(Asn) + L-glutamate + ADP + phosphate + 2 H(+). In terms of biological role, allows the formation of correctly charged Asn-tRNA(Asn) or Gln-tRNA(Gln) through the transamidation of misacylated Asp-tRNA(Asn) or Glu-tRNA(Gln) in organisms which lack either or both of asparaginyl-tRNA or glutaminyl-tRNA synthetases. The reaction takes place in the presence of glutamine and ATP through an activated phospho-Asp-tRNA(Asn) or phospho-Glu-tRNA(Gln). The polypeptide is Aspartyl/glutamyl-tRNA(Asn/Gln) amidotransferase subunit B (Anaeromyxobacter dehalogenans (strain 2CP-C)).